The sequence spans 342 residues: Autoinducer 2 import system permease protein LsrC (342 aa).

The Periplasmic portion of the chain corresponds to 1 to 13; sequence MLKFIQNNREITA. A helical transmembrane segment spans residues 14–34; it reads LLAVVLLFVLPGFLDRQYLSV. Over 35–38 the chain is Cytoplasmic; sequence QTLT. Residues 39–59 traverse the membrane as a helical segment; sequence MVYSSAQILILLAMGATLVML. Residues 60–69 lie on the Periplasmic side of the membrane; sequence TRNIDVSVGS. Residues 70-90 form a helical membrane-spanning segment; the sequence is ITGMCAVLLGMLLNAGYSLPV. Topologically, residues 91–92 are cytoplasmic; sequence AC. A helical transmembrane segment spans residues 93–113; it reads VATLLLGLLAGFFNGVLVAWL. Position 114 (lysine 114) is a topological domain, periplasmic. The chain crosses the membrane as a helical span at residues 115-135; sequence IPAIVATLGTLGLYRGIMLLW. At 136 to 154 the chain is on the cytoplasmic side; that stretch reads TGGKWIEGLPAELKQLSAP. Residues 155–175 traverse the membrane as a helical segment; it reads LLFGVSAIGWLTIILVAFMAW. The Periplasmic portion of the chain corresponds to 176–212; it reads LLAKTAFGRSFYVTGDNLQGARQLGVRTEAIRIVAFS. A helical membrane pass occupies residues 213–233; the sequence is LNGCMAALAGIVFASQIGFIP. The Cytoplasmic segment spans residues 234–251; it reads NQTGTGLEMKAIAACVLG. The chain crosses the membrane as a helical span at residues 252–272; sequence GISLLGGSGAIIGAVLGAWFL. Residues 273 to 283 are Periplasmic-facing; the sequence is TQIDSVLVLLR. Residues 284–304 traverse the membrane as a helical segment; it reads IPAWWNDFIAGMVLLAVLVFD. Residues 305–342 are Cytoplasmic-facing; it reads GRLRCALERNLRRQKYARFMMPPPPVKPASSGKKREAA.

It belongs to the binding-protein-dependent transport system permease family. AraH/RbsC subfamily. In terms of assembly, the complex is composed of two ATP-binding proteins (LsrA), two transmembrane proteins (LsrC and LsrD) and a solute-binding protein (LsrB).

It is found in the cell inner membrane. Its function is as follows. Part of the ABC transporter complex LsrABCD involved in autoinducer 2 (AI-2) import. Probably responsible for the translocation of the substrate across the membrane. In Escherichia coli (strain SMS-3-5 / SECEC), this protein is Autoinducer 2 import system permease protein LsrC (lsrC).